The chain runs to 215 residues: Cytochrome b6 (215 aa).

The Cytoplasmic segment spans residues 1 to 31 (MANVYDWFQERLEIQALADDVTSKYVPPHVN). The chain crosses the membrane as a helical span at residues 32 to 52 (IFYCLGGITLTCFLIQFATGF). Cysteine 35 lines the heme c pocket. Residues 53–89 (AMTFYYKPTVTEAYASVQYIMNEVSFGWLIRSIHRWS) lie on the Lumenal, thylakoid side of the membrane. Heme b contacts are provided by arginine 83, histidine 86, histidine 100, and arginine 103. The helical transmembrane segment at 90–110 (ASMMVLMMILHVFRVYLTGGF) threads the bilayer. Over 111–115 (KKPRE) the chain is Cytoplasmic. The helical transmembrane segment at 116–136 (LTWISGVILAVITVSFGVTGY) threads the bilayer. At 137-185 (SLPWDQVGYWAVKIVSGVPEAIPVVGVLISDLLRGGSSVGQATLTRYYS) the chain is on the lumenal, thylakoid side. A helical transmembrane segment spans residues 186–206 (AHTFVLPWLIAVFMLLHFLMI). The heme b site is built by histidine 187 and histidine 202. The Cytoplasmic segment spans residues 207–215 (RKQGISGPL). Lysine 208 is a binding site for heme c.

It belongs to the cytochrome b family. PetB subfamily. In terms of assembly, the 4 large subunits of the cytochrome b6-f complex are cytochrome b6, subunit IV (17 kDa polypeptide, PetD), cytochrome f and the Rieske protein, while the 4 small subunits are PetG, PetL, PetM and PetN. The complex functions as a dimer. It depends on heme b as a cofactor. Requires heme c as cofactor.

It localises to the cellular thylakoid membrane. In terms of biological role, component of the cytochrome b6-f complex, which mediates electron transfer between photosystem II (PSII) and photosystem I (PSI), cyclic electron flow around PSI, and state transitions. This Mastigocladus laminosus (Fischerella sp.) protein is Cytochrome b6.